The chain runs to 715 residues: Scinderin (715 aa).

Residues 1-363 (MAQGLYHEEF…DGFGKVYVTE (363 aa)) are actin-severing. The stretch at 27–77 (LELVPVPESAYGNFYVGDAYLVLHTTQASRGFTYRLHFWLGKECTQDESTA) is one Gelsolin-like 1 repeat. A Phosphotyrosine modification is found at Tyr-102. Residues 112–119 (KGGLKYKA) and 138–146 (RLLHVKGRR) contribute to the a 1,2-diacyl-sn-glycero-3-phospho-(1D-myo-inositol-4,5-bisphosphate) site. 4 Gelsolin-like repeats span residues 148-188 (VRAT…YERL), 265-307 (LVAE…QERK), 398-451 (VQIW…DELT), and 523-564 (TRIM…EEEK). The segment at 364–715 (KVAHVKQIPF…WFLGWDSSRW (352 aa)) is actin-binding, Ca-sensitive. Residues 364–715 (KVAHVKQIPF…WFLGWDSSRW (352 aa)) form a ca(2+)-dependent actin binding region. Residues Asn-538, Asp-539, and Glu-562 each contribute to the Ca(2+) site. Tyr-599 is subject to Phosphotyrosine. Residues 626-668 (FIIEEVPGEFTQDDLAEDDVMLLDAWEQIFIWIGKDANEVEKS) form a Gelsolin-like 6 repeat. Asp-643, Asp-644, and Glu-666 together coordinate Ca(2+).

The protein belongs to the villin/gelsolin family. The N-terminus is blocked. As to expression, in the adrenal gland, expressed in the medulla but, in the cortex, found only in diffuse parts.

The protein localises to the cytoplasm. Its subcellular location is the cytoskeleton. It is found in the cell projection. It localises to the podosome. Functionally, ca(2+)-dependent actin filament-severing protein that has a regulatory function in exocytosis by affecting the organization of the microfilament network underneath the plasma membrane. In vitro, also has barbed end capping and nucleating activities in the presence of Ca(2+). Severing activity is inhibited by phosphatidylinositol 4,5-bis-phosphate (PIP2). Required for megakaryocyte differentiation, maturation, polyploidization and apoptosis with the release of platelet-like particles. Plays a role in osteoclastogenesis (OCG) and actin cytoskeletal organization in osteoclasts. Regulates chondrocyte proliferation and differentiation. Inhibits cell proliferation and tumorigenesis. Signaling is mediated by MAPK, p38 and JNK pathways. This Bos taurus (Bovine) protein is Scinderin.